Reading from the N-terminus, the 258-residue chain is Peptidase inhibitor 15 (258 aa).

The first 19 residues, 1 to 19 (MIAISAVSSALLFSLLCEA), serve as a signal peptide directing secretion. Positions 20–60 (STVVLLNSTDSSPPTNNFTDIEAALKAQLDSADIPKARRKR) are excised as a propeptide. Residues asparagine 26, asparagine 36, and asparagine 124 are each glycosylated (N-linked (GlcNAc...) asparagine). Residues 71–211 (LDYHNQVRGK…RRAVYLVCNY (141 aa)) enclose the SCP domain.

This sequence belongs to the CRISP family. N-glycosylated. As to expression, weakly expressed. Expressed at low level in prostate, mammary gland, salivary gland and thyroid gland.

It is found in the secreted. In terms of biological role, serine protease inhibitor which displays weak inhibitory activity against trypsin. May play a role in facial patterning during embryonic development. This Homo sapiens (Human) protein is Peptidase inhibitor 15 (PI15).